A 290-amino-acid chain; its full sequence is Acetyl-coenzyme A carboxylase carboxyl transferase subunit beta (290 aa).

In terms of domain architecture, CoA carboxyltransferase N-terminal spans 27 to 290 (LWIKCPSCEA…LTRQPADAVA (264 aa)). The Zn(2+) site is built by Cys31, Cys34, Cys50, and Cys53. The C4-type zinc-finger motif lies at 31-53 (CPSCEAVLYRNDVEANLHVCPKC).

It belongs to the AccD/PCCB family. In terms of assembly, acetyl-CoA carboxylase is a heterohexamer composed of biotin carboxyl carrier protein (AccB), biotin carboxylase (AccC) and two subunits each of ACCase subunit alpha (AccA) and ACCase subunit beta (AccD). The cofactor is Zn(2+).

The protein resides in the cytoplasm. The catalysed reaction is N(6)-carboxybiotinyl-L-lysyl-[protein] + acetyl-CoA = N(6)-biotinyl-L-lysyl-[protein] + malonyl-CoA. It participates in lipid metabolism; malonyl-CoA biosynthesis; malonyl-CoA from acetyl-CoA: step 1/1. In terms of biological role, component of the acetyl coenzyme A carboxylase (ACC) complex. Biotin carboxylase (BC) catalyzes the carboxylation of biotin on its carrier protein (BCCP) and then the CO(2) group is transferred by the transcarboxylase to acetyl-CoA to form malonyl-CoA. The protein is Acetyl-coenzyme A carboxylase carboxyl transferase subunit beta of Paraburkholderia phymatum (strain DSM 17167 / CIP 108236 / LMG 21445 / STM815) (Burkholderia phymatum).